Consider the following 366-residue polypeptide: MLSNSVNNNNNNNNINNSNSNNNDSNIHKNVKKLMVASIFGGIMSSLIVTPLDVVKTRLQTQNTGSHINQKHVFKGTLDAFKKIYKNEGPLTFWRGVTPSLLMTIPSATIYFTSYEYLKEYLYQFNDTEAYNIYTVPLVAGTLARIFSASVTSPFELLRTNSQGIVLQNAYKNTVAMAASSSTATIGTIPLSSEQRFNSFKLYRDIVNNVGIKGLWRGLGPTLVRDVPFSAIYWAGYEVLKNKLMKSQIDPNFSRNSKSPFFINFIAGATSGTLAAVLTTPIDVIKTRIQMSAQQTLSPSLTPQQQLDFIKKNNSSIYHLKQILSQEGWKGLTKGLVPRVAKVSPACAIMISTFEYIKQSHIADDN.

Residues 1-25 (MLSNSVNNNNNNNNINNSNSNNNDS) are compositionally biased toward low complexity. The interval 1–26 (MLSNSVNNNNNNNNINNSNSNNNDSN) is disordered. 3 Solcar repeats span residues 29–121 (KNVK…LKEY), 132–243 (NIYT…LKNK), and 259–360 (SPFF…IKQS). Transmembrane regions (helical) follow at residues 35–55 (MVAS…LDVV), 96–112 (GVTP…TIYF), 133–151 (IYTV…SASV), 175–192 (VAMA…IPLS), 262–282 (FINF…TTPI), and 340–357 (VAKV…FEYI).

Belongs to the mitochondrial carrier (TC 2.A.29) family.

The protein resides in the mitochondrion inner membrane. In terms of biological role, mitochondrial transporter required for glutathione import into mitochondria. The polypeptide is Mitochondrial substrate carrier family protein H (Dictyostelium discoideum (Social amoeba)).